We begin with the raw amino-acid sequence, 578 residues long: Isocitrate dehydrogenase kinase/phosphatase (578 aa).

Residues 315–321 and K336 contribute to the ATP site; that span reads APGIRGM. D371 is a catalytic residue.

This sequence belongs to the AceK family.

It is found in the cytoplasm. The enzyme catalyses L-seryl-[isocitrate dehydrogenase] + ATP = O-phospho-L-seryl-[isocitrate dehydrogenase] + ADP + H(+). Its function is as follows. Bifunctional enzyme which can phosphorylate or dephosphorylate isocitrate dehydrogenase (IDH) on a specific serine residue. This is a regulatory mechanism which enables bacteria to bypass the Krebs cycle via the glyoxylate shunt in response to the source of carbon. When bacteria are grown on glucose, IDH is fully active and unphosphorylated, but when grown on acetate or ethanol, the activity of IDH declines drastically concomitant with its phosphorylation. The chain is Isocitrate dehydrogenase kinase/phosphatase from Escherichia coli (strain K12 / MC4100 / BW2952).